The chain runs to 387 residues: Protein RecA (387 aa).

An ATP-binding site is contributed by 78-85 (GPESSGKT). Residues 355 to 369 (KSIERDTKETKETKS) are compositionally biased toward basic and acidic residues. Positions 355-387 (KSIERDTKETKETKSKQPVSFSTEADGDIAVGE) are disordered.

Belongs to the RecA family.

The protein resides in the cytoplasm. In terms of biological role, can catalyze the hydrolysis of ATP in the presence of single-stranded DNA, the ATP-dependent uptake of single-stranded DNA by duplex DNA, and the ATP-dependent hybridization of homologous single-stranded DNAs. It interacts with LexA causing its activation and leading to its autocatalytic cleavage. In Leptospira biflexa serovar Patoc (strain Patoc 1 / ATCC 23582 / Paris), this protein is Protein RecA.